The chain runs to 313 residues: MTRPIAVIGPTATGKSALALELAERLGGEIVNADAMQLYRGMDIGTAKVPECERRGLVHHMLDVLDVTETATVATYQERAVATIDDIRARGHVPVIVGGSMMYIQALLDDWAFPATDPQVRARWEERLAQIGVTALHAELAARDPAAAAIILPTDGRRTVRALEVIELTGQPFAASAPTIGPPRWDTLIVGLDWETEKLDDRIARRTDLMFEQGFVGEVEYLLSTGLRDGVTASRAIGYAQVIAALDAGGGAGALAQARDLTFVGTRRYVRRQRSWFGRDHRVVWLAGESVETGGPEGLAGEIVSRWRLSSNT.

9–16 (GPTATGKS) is a binding site for ATP. 11–16 (TATGKS) lines the substrate pocket.

The protein belongs to the IPP transferase family. In terms of assembly, monomer. Mg(2+) serves as cofactor.

It catalyses the reaction adenosine(37) in tRNA + dimethylallyl diphosphate = N(6)-dimethylallyladenosine(37) in tRNA + diphosphate. Its function is as follows. Catalyzes the transfer of a dimethylallyl group onto the adenine at position 37 in tRNAs that read codons beginning with uridine, leading to the formation of N6-(dimethylallyl)adenosine (i(6)A). This Mycobacteroides abscessus (strain ATCC 19977 / DSM 44196 / CCUG 20993 / CIP 104536 / JCM 13569 / NCTC 13031 / TMC 1543 / L948) (Mycobacterium abscessus) protein is tRNA dimethylallyltransferase.